The chain runs to 280 residues: Urease accessory protein UreD (280 aa).

Belongs to the UreD family. UreD, UreF and UreG form a complex that acts as a GTP-hydrolysis-dependent molecular chaperone, activating the urease apoprotein by helping to assemble the nickel containing metallocenter of UreC. The UreE protein probably delivers the nickel.

It localises to the cytoplasm. In terms of biological role, required for maturation of urease via the functional incorporation of the urease nickel metallocenter. This is Urease accessory protein UreD from Mesorhizobium japonicum (strain LMG 29417 / CECT 9101 / MAFF 303099) (Mesorhizobium loti (strain MAFF 303099)).